A 177-amino-acid chain; its full sequence is Large ribosomal subunit protein uL6 (177 aa).

Belongs to the universal ribosomal protein uL6 family. In terms of assembly, part of the 50S ribosomal subunit.

In terms of biological role, this protein binds to the 23S rRNA, and is important in its secondary structure. It is located near the subunit interface in the base of the L7/L12 stalk, and near the tRNA binding site of the peptidyltransferase center. This is Large ribosomal subunit protein uL6 from Erwinia tasmaniensis (strain DSM 17950 / CFBP 7177 / CIP 109463 / NCPPB 4357 / Et1/99).